A 573-amino-acid polypeptide reads, in one-letter code: NEDD4-binding protein 3-B (573 aa).

3 disordered regions span residues 119–138, 173–220, and 384–405; these read EFSKSSLPERGHSDKSRFGP, CVGS…NSYS, and GENEELRQKQSQSDNSGPNLED. Basic and acidic residues predominate over residues 125 to 135; it reads LPERGHSDKSR. Over residues 186 to 196 the composition is skewed to low complexity; sequence SNSHSNNPSES. Composition is skewed to polar residues over residues 207–220 and 392–401; these read DSKQNSINSLNSYS and KQSQSDNSGP. A coiled-coil region spans residues 287–474; sequence ESVEDVARQL…CLQALEDVKS (188 aa).

The protein belongs to the N4BP3 family.

The protein localises to the cytoplasmic vesicle. Its subcellular location is the cell projection. The protein resides in the axon. It is found in the dendrite. Its function is as follows. Plays a role in axon and dendrite arborization during cranial nerve development. Also important for neural crest migration and early development of other anterior structures including eye, brain and cranial cartilage. In Xenopus laevis (African clawed frog), this protein is NEDD4-binding protein 3-B.